The primary structure comprises 154 residues: Resuscitation-promoting factor RpfD (154 aa).

The helical transmembrane segment at 21 to 41 threads the bilayer; it reads IVCTVFIETAVVATMFVALLG.

This sequence belongs to the transglycosylase family. Rpf subfamily.

It localises to the cell membrane. Factor that stimulates resuscitation of dormant cells. Has peptidoglycan (PG) hydrolytic activity. PG fragments could either directly activate the resuscitation pathway of dormant bacteria or serve as a substrate for endogenous Rpf, resulting in low molecular weight products with resuscitation activity. In Mycobacterium tuberculosis (strain CDC 1551 / Oshkosh), this protein is Resuscitation-promoting factor RpfD (rpfD).